We begin with the raw amino-acid sequence, 38 residues long: Large ribosomal subunit protein bL36 (38 aa).

The protein belongs to the bacterial ribosomal protein bL36 family.

In Enterococcus faecalis (strain ATCC 700802 / V583), this protein is Large ribosomal subunit protein bL36.